The sequence spans 905 residues: Stonin-2 (905 aa).

Disordered regions lie at residues 1-121 (MTTL…HQET), 178-205 (EQTS…VEME), and 244-263 (LPPV…SVIP). Over residues 40–50 (SSSPDQSESSS) the composition is skewed to low complexity. Basic and acidic residues predominate over residues 60 to 73 (SQDHSHSEQDDSSE). Residues 85–94 (PGSPEQPPPD) show a composition bias toward pro residues. Positions 178–196 (EQTSGQASGADSTDNSSSL) are enriched in polar residues. Positions 244 to 256 (LPPVTSPLKPNTP) are enriched in pro residues. Thr-255 carries the phosphothreonine modification. Phosphoserine is present on residues Ser-281, Ser-287, and Ser-302. 2 consecutive short sequence motifs (NPF) follow at residues 313–315 (NPF) and 329–331 (NPF). Positions 427–560 (GWPMMLRIPE…DLPVLSMDLS (134 aa)) constitute an SHD domain. The region spanning 568 to 878 (EEEITVDVRD…SYQVALGSIW (311 aa)) is the MHD domain. Phosphoserine is present on Ser-762.

Belongs to the Stoned B family. Interacts with the second C2 domain of synaptotagmins SYT1 and SYT2. Interacts with EPS15, EPS15R and ITSN1. Interacts indirectly with the AP-2 adapter complex. Interacts with TOR1A and COPS4; the interaction controls STON2 protein stability. Phosphorylated in vitro by PKD. In terms of processing, neddylated; deneddylated via its interaction with the COP9 signalosome (CSN) complex through TOR1A and COPS4. Post-translationally, ubiquitinated; leading to its degradation. In terms of tissue distribution, ubiquitous.

The protein localises to the cytoplasm. The protein resides in the membrane. It is found in the synapse. It localises to the synaptosome. Adapter protein involved in endocytic machinery. Involved in the synaptic vesicle recycling. May facilitate clathrin-coated vesicle uncoating. This chain is Stonin-2 (STON2), found in Homo sapiens (Human).